The sequence spans 458 residues: MGKEKTHVNVVVIGHVDSGKSTTTGHLIYKCGGIDKRTIEKFEKEAAELGKGSFKYAWVLDKLKAERERGITIDIALWKFETPKYHVTVIDAPGHRDFIKNMITGTSQADCAILIIAGGTGEFEAGISKDGQTREHALLAYTLGVRQLIVAVNKMDSVKWDKNRFEEIIKETSNFVKKVGYNPKTVPFVPISGWNGDNMIEASTNCPWYKGWEKETKAGKSTGKTLLEAIDAIEPPQRPTDKPLRLPLQDVYKIGGIGTVPVGRVETGIIKAGMVVTFAPAGVTTEVKSVEMHHEQLVEGVPGDNVGFNVKNVSVKEIRRGNVCGDSKNDPPKGCDSFTAQVIVLNHPGQISAGYSPVLDCHTAHIACKFDTLLEKIDRRTGKKMEDNPKFVKSGDASIVKMVPSKPMCVEAFTDYPPLGRFAVRDMRQTVAVGVIKSVEKSDKAGKVTKAAQKAAKK.

Residue Gly2 is modified to N,N,N-trimethylglycine. Lys3 carries the N6,N6-dimethyllysine; alternate modification. Lys3 is subject to N6-methyllysine; alternate. One can recognise a tr-type G domain in the interval 5–240 (KTHVNVVVIG…DAIEPPQRPT (236 aa)). The segment at 14 to 21 (GHVDSGKS) is G1. Residue 14-21 (GHVDSGKS) coordinates GTP. Lys30 carries the post-translational modification N6-methyllysine. A G2 region spans residues 70–74 (GITID). Residue Lys79 is modified to N6,N6,N6-trimethyllysine. The tract at residues 91–94 (DAPG) is G3. Residues 91-95 (DAPGH) and 153-156 (NKMD) contribute to the GTP site. The G4 stretch occupies residues 153–156 (NKMD). The G5 stretch occupies residues 192–194 (SGW). Residue Lys316 is modified to N6,N6-dimethyllysine; alternate. Lys316 carries the post-translational modification N6-methyllysine; alternate. Lys390 carries the N6-methyllysine modification.

The protein belongs to the TRAFAC class translation factor GTPase superfamily. Classic translation factor GTPase family. EF-Tu/EF-1A subfamily.

It is found in the cytoplasm. It functions in the pathway protein biosynthesis; polypeptide chain elongation. In terms of biological role, this protein promotes the GTP-dependent binding of aminoacyl-tRNA to the A-site of ribosomes during protein biosynthesis. The protein is Elongation factor 1-alpha (TEF1) of Meyerozyma guilliermondii (strain ATCC 6260 / CBS 566 / DSM 6381 / JCM 1539 / NBRC 10279 / NRRL Y-324) (Yeast).